An 804-amino-acid polypeptide reads, in one-letter code: MLPETMPVCPVRGSVIYPTMVMPIDAGRPISIRAIDEALARDRVLLIVSQRDKEVETPRPSDLFEVGTACNILKMRKNPDGSVQVLVQAFARVRVREWLDLGDHLEARGEVLADEPGEPILVKALVREVKDKFQALLKEGKYLAPEVAQFILNLEDPSQLADYVAFHMDFRLEDKQKVLETANVAERLRAVLVLLEAELALIETQRRIQQQVKEEIDRNQREYFLREQMKAIQRELHGEEGEQEVEEFRRKLEALDLPPVVRQEVERELNRFARMHPDSAEASVIRTYLDWIVNLPWNTRTEDNLDLERAKEILERDHYGLEKVKDRVLEYLAVRKLKAERAKRGEIPPDEVNKGPILLFVGPPGVGKTSIAKSIAEALGRKYVRVSLGGVRDESDIRGHRRTYIGAMPGRIIQGLRQAGTKNPVFLLDEVDKLGISYQGDPAAALLEVLDPAQNKEFVDHYLGVPFDLSEVMFICTANFPQNIPAPLYDRMEPIEFTSYTEQEKLEIAKRYLLPRQLKENGLEPEQVVVTEAALTRLITHYTREAGVRQLEREIGALLRKAARRILEEGKKRVRITEKDLEAYLGPPRFLPETEAREPQVGVATGMYYTPVGGDIMFVEVSVMPGKGNLILTGQLGDVMKESARAALSYAKKNALRFGIPLEKFDKSDIHIHVPAGAIPKEGPSAGVALVSALVSALTEVPVRHDIAMTGEITLTGRVLPIGGVKEKVLGARRAGIREVILPKLNEPDLADIPKPLRQNMTFHFVEHLDQVLDLALVGGLKALEERGRRSRSARRKKELVAHA.

One can recognise a Lon N-terminal domain in the interval 6-199 (MPVCPVRGSV…AVLVLLEAEL (194 aa)). An ATP-binding site is contributed by 362–369 (GPPGVGKT). In terms of domain architecture, Lon proteolytic spans 598–779 (EPQVGVATGM…DQVLDLALVG (182 aa)). Residues serine 685 and lysine 728 contribute to the active site.

The protein belongs to the peptidase S16 family. As to quaternary structure, homohexamer. Organized in a ring with a central cavity.

It is found in the cytoplasm. The enzyme catalyses Hydrolysis of proteins in presence of ATP.. Its function is as follows. ATP-dependent serine protease that mediates the selective degradation of mutant and abnormal proteins as well as certain short-lived regulatory proteins. Required for cellular homeostasis and for survival from DNA damage and developmental changes induced by stress. Degrades polypeptides processively to yield small peptide fragments that are 5 to 10 amino acids long. Binds to DNA in a double-stranded, site-specific manner. This Thermus thermophilus (strain ATCC BAA-163 / DSM 7039 / HB27) protein is Lon protease 2.